Consider the following 569-residue polypeptide: Phosphoglucomutase 2 (569 aa).

The tract at residues M1–L23 is disordered. N-acetylserine is present on S2. R24 contributes to the alpha-D-glucose 1,6-bisphosphate binding site. 2 positions are modified to phosphothreonine: T111 and T117. Position 119 (S119) interacts with alpha-D-glucose 1,6-bisphosphate. S119 (phosphoserine intermediate) is an active-site residue. Mg(2+) contacts are provided by S119, D290, D292, and D294. S119 is modified (phosphoserine). The alpha-D-glucose 1,6-bisphosphate site is built by D294, R295, T359, E378, S380, and K391.

This sequence belongs to the phosphohexose mutase family. As to quaternary structure, monomer. The cofactor is Mg(2+). Zn(2+) is required as a cofactor. In terms of processing, O-glycosylated with mannose residues. Substrate of UDP-glucose--glycoprotein glucose phosphotransferase, linking glucose in a phosphodiester linkage to O-linked mannose.

It is found in the cytoplasm. The catalysed reaction is alpha-D-glucose 1-phosphate = alpha-D-glucose 6-phosphate. The enzyme catalyses O-phospho-L-seryl-[protein] + alpha-D-glucose 1-phosphate = alpha-D-glucose 1,6-bisphosphate + L-seryl-[protein]. It catalyses the reaction alpha-D-glucose 1,6-bisphosphate + L-seryl-[protein] = O-phospho-L-seryl-[protein] + alpha-D-glucose 6-phosphate. In terms of biological role, major phosphoglucomutase isozyme that catalyzes the reversible isomerization of alpha-D-glucose 1-phosphate to alpha-D-glucose 6-phosphate. The mechanism proceeds via the intermediate compound alpha-D-glucose 1,6-bisphosphate. Constitutes about 80-90% of the phosphoglucomutase activity in the cell. Key enzyme in hexose metabolism. The forward reaction is an essential step in the energy metabolism of galactose since the product of the galactose pathway enzymes in yeast is glucose 1-phosphate. The reverse reaction is an essential step for biosynthesis when carbon sources other than galactose are the energy source because glucose 1-phosphate is the starting point for the synthesis of UDP-glucose, which acts as a precursor for the synthesis of oligosaccharides and trehalose. In Saccharomyces cerevisiae (strain ATCC 204508 / S288c) (Baker's yeast), this protein is Phosphoglucomutase 2.